The sequence spans 296 residues: MASIKEELISAAESESQVMQIVQAALEGIDMDALTSMTPGLPQTVRQTAINSLLSSKKLAIQQAPGGVLRLKVNTSEQIAGTEEEQVIYSLIEESKTRGIWIKELREGSGLNQLQLRKTLKSLETKKLIKTIKAVGTTRKCYILFSIEPDMSLTGGTFYSDQQLDSELINTLISVCGSYAASRRKHAIDENPNNIQMQREASYIRPQEIAQFITEKRVLNVPLSLEDLERILEVAVLDGTIERRADGKIRACPPRSSISPLVSVPCAICPVVEDCRPGYVISPQSCDYMKNWLADL.

It belongs to the eukaryotic RPC34/RPC39 RNA polymerase subunit family.

The protein localises to the nucleus. Its function is as follows. DNA-dependent RNA polymerase catalyzes the transcription of DNA into RNA using the four ribonucleoside triphosphates as substrates. Specific peripheric component of RNA polymerase III which synthesizes small RNAs, such as 5S rRNA and tRNAs. The protein is Probable DNA-directed RNA polymerase III subunit RPC6 of Caenorhabditis elegans.